The chain runs to 265 residues: Protein N-terminal and lysine N-methyltransferase EFM7 (265 aa).

Positions 1–25 (MSSDHEEDSLYGATELFGEPDGFYE) are disordered. Residues Trp67, 93–95 (GAA), Asp115, Trp152, and Ser176 contribute to the S-adenosyl-L-methionine site.

This sequence belongs to the class I-like SAM-binding methyltransferase superfamily. EFM7 family.

It localises to the cytoplasm. In terms of biological role, S-adenosyl-L-methionine-dependent protein methyltransferase that trimethylates the N-terminal glycine 'Gly-2' of elongation factor 1-alpha, before also catalyzing the mono- and dimethylation of 'Lys-3'. This chain is Protein N-terminal and lysine N-methyltransferase EFM7, found in Eremothecium gossypii (strain ATCC 10895 / CBS 109.51 / FGSC 9923 / NRRL Y-1056) (Yeast).